A 300-amino-acid chain; its full sequence is NAD kinase (300 aa).

Asp78 acts as the Proton acceptor in catalysis. Residues 78-79, 152-153, His163, Arg180, Asp182, and 193-198 each bind NAD(+); these read DG, ND, and TAYALS.

It belongs to the NAD kinase family. Requires a divalent metal cation as cofactor.

The protein localises to the cytoplasm. The enzyme catalyses NAD(+) + ATP = ADP + NADP(+) + H(+). Involved in the regulation of the intracellular balance of NAD and NADP, and is a key enzyme in the biosynthesis of NADP. Catalyzes specifically the phosphorylation on 2'-hydroxyl of the adenosine moiety of NAD to yield NADP. The protein is NAD kinase of Alcanivorax borkumensis (strain ATCC 700651 / DSM 11573 / NCIMB 13689 / SK2).